The following is a 190-amino-acid chain: NADH-dependent phenylglyoxylate dehydrogenase subunit gamma (190 aa).

As to quaternary structure, dimer of heteropentamers composed of an alpha (PadG), a beta (PadI), a gamma (PadE), a delta (PadF) and an epsilon (PadH) subunit.

The catalysed reaction is phenylglyoxylate + NAD(+) + CoA = benzoyl-CoA + CO2 + NADH. Activated by magnesium ions and thiamine diphosphate. Involved in the anaerobic metabolism of phenylalanine and phenylacetate. Catalyzes the oxidative decarboxylation of phenylglyoxylate to benzoyl-CoA and CO(2). It can also react slowly with 2-oxo-3-methylbutanoate and use different electron acceptors such as benzyl viologen, methyl viologen, FAD or FMN, but NAD seems to be the physiological electron acceptor. Also catalyzes an isotope exchange between CO(2) and the carboxyl group which proves partial or complete reversibility of the oxidative decarboxylation reaction. This Aromatoleum evansii (Azoarcus evansii) protein is NADH-dependent phenylglyoxylate dehydrogenase subunit gamma (padE).